We begin with the raw amino-acid sequence, 1214 residues long: Delta-latroinsectotoxin-Lt1a (1214 aa).

A helix H2 is the probable transmembrane region of the tetrameric pore inserted in the target cell membrane region spans residues 64 to 89; sequence IGSIPVIGEVVGIVTAPIAIVSHITS. Positions 250–269 are helix H8 is the probable transmembrane region of the tetrameric pore inserted in the target cell membrane; that stretch reads ALYALFYGTQTYAAVMFFLL. ANK repeat units lie at residues 464–497, 501–532, 536–565, 570–600, 604–633, 637–666, 670–699, 706–734, 740–769, 773–802, 806–835, 839–868, 872–901, 906–936, and 966–994; these read DIHR…DIEA, NDRS…DIEL, NGFT…DVNA, TNLT…KVNE, DGFT…DKNA, SGLT…DLNI, NHMA…KVSI, NNWT…DINL, GNLT…NIEE, EGYT…DIEA, DNLT…DIGA, DGST…NLKE, NKYL…SLKD, EGRT…TLDE, and VKPT…PEGS. A propeptide spans 1020–1214 (C-terminal domain cleavage is required for toxin activation); the sequence is IVKETNSRYL…IDVHQKMFLR (195 aa).

It belongs to the cationic peptide 01 (latrotoxin) family. 04 (delta-latroinsectotoxin) subfamily. As to quaternary structure, homotetramer in membrane. As to expression, expressed by the venom gland.

It localises to the secreted. Its subcellular location is the target cell membrane. Its function is as follows. Insecticidal presynaptic neurotoxin that induces massive neurotransmitter release at insect (but not vertebrate) neuromuscular junctions. Native toxin forms cation-permeable pores (with high permeability to calcium) in lipid membranes locust muscle membrane and artificial lipid bilayers. May bind to insect neurexin-1 homolog, insect adhesion G protein-coupled receptor L1 homolog, and insect receptor-type tyrosine-protein phosphatase S homolog, and induces neurotransmitter exocytosis both by forming tetrameric pores in membranes and signaling via G protein-coupled receptor. Oligomerization is a process independent of divalent cations. The sequence is that of Delta-latroinsectotoxin-Lt1a from Latrodectus tredecimguttatus (Mediterranean black widow spider).